The sequence spans 103 residues: Large ribosomal subunit protein bL28 (103 aa).

The protein belongs to the bacterial ribosomal protein bL28 family.

This chain is Large ribosomal subunit protein bL28, found in Anaplasma marginale (strain St. Maries).